The following is a 316-amino-acid chain: Porphobilinogen deaminase (316 aa).

Position 245 is an S-(dipyrrolylmethanemethyl)cysteine (Cys-245).

It belongs to the HMBS family. As to quaternary structure, monomer. It depends on dipyrromethane as a cofactor.

The enzyme catalyses 4 porphobilinogen + H2O = hydroxymethylbilane + 4 NH4(+). Its pathway is porphyrin-containing compound metabolism; protoporphyrin-IX biosynthesis; coproporphyrinogen-III from 5-aminolevulinate: step 2/4. It functions in the pathway porphyrin-containing compound metabolism; chlorophyll biosynthesis. Its function is as follows. Tetrapolymerization of the monopyrrole PBG into the hydroxymethylbilane pre-uroporphyrinogen in several discrete steps. In Prochlorococcus marinus (strain MIT 9312), this protein is Porphobilinogen deaminase.